The primary structure comprises 206 residues: Ribosomal RNA small subunit methyltransferase G (206 aa).

Residues Gly-71, Phe-76, 125 to 126 (IE), and Arg-139 contribute to the S-adenosyl-L-methionine site.

It belongs to the methyltransferase superfamily. RNA methyltransferase RsmG family.

Its subcellular location is the cytoplasm. It catalyses the reaction guanosine(527) in 16S rRNA + S-adenosyl-L-methionine = N(7)-methylguanosine(527) in 16S rRNA + S-adenosyl-L-homocysteine. Functionally, specifically methylates the N7 position of guanine in position 527 of 16S rRNA. The chain is Ribosomal RNA small subunit methyltransferase G from Cereibacter sphaeroides (strain ATCC 17023 / DSM 158 / JCM 6121 / CCUG 31486 / LMG 2827 / NBRC 12203 / NCIMB 8253 / ATH 2.4.1.) (Rhodobacter sphaeroides).